The primary structure comprises 235 residues: Protein mxl-3 (235 aa).

Positions 18-49 are disordered; the sequence is EKQFRKRHHSDSSDDDSSSPKSASPSMDDDRR. Positions 47–60 are basic motif; that stretch reads DRRAHHNELERRRR. The region spanning 47–98 is the bHLH domain; it reads DRRAHHNELERRRRDHIKDHFTILKDAIPLLDGEKSSRALILKRAVEFIHVM. The tract at residues 61 to 98 is helix-loop-helix motif; sequence DHIKDHFTILKDAIPLLDGEKSSRALILKRAVEFIHVM.

Belongs to the MAX family. May form homodimer. Interacts (via N-terminus) with skn-1 isoforms a and c. Expressed in the intestine and in the AWC sensory neurons.

The protein localises to the nucleus. It localises to the cytoplasm. Its function is as follows. Transcription factor which regulates the expression of genes involved in lipid metabolism in response to nutrient availability. Binds to the E-box motif 5'-CACGTG-3'. Under well-fed conditions, binds to the promoter and represses the expression of lipase genes lipl-1, lipl-2, lipl-3 and to a lesser extent lipl-5, thereby preventing lipolysis. In response to a high-glucose diet, promotes fatty acid synthesis, elongation and desaturation by up-regulating transcription factor sbp-1 expression. Under well-fed conditions, acts remotely in the intestine to up-regulate the expression of chemoreceptor srh-234 gene in the ADL sensory neuron, possibly by regulating the insulin signaling pathway. The polypeptide is Protein mxl-3 (Caenorhabditis elegans).